A 170-amino-acid polypeptide reads, in one-letter code: Inducible metalloproteinase inhibitor protein (170 aa).

The N-terminal stretch at 1–19 (MKCLLYLCLWCYCVLVSSS) is a signal peptide. N-linked (GlcNAc...) asparagine glycosylation is found at Asn-48 and Asn-149.

Cleaved. In terms of processing, five disulfide bonds are present. When artificially cleaved by thermolysin between Asn-56 and Ile-57, the two obtained chains (called heavy and light chains) remain linked. Post-translationally, the N-terminus is blocked.

Functionally, inhibits thermolysin, bacillolysin and pseudolysin, B.polymyxa metalloprotease and human MMP1 and MMP3. No activity on trypsin or cysteine protease papain. The protein is Inducible metalloproteinase inhibitor protein (IMPI) of Galleria mellonella (Greater wax moth).